The chain runs to 68 residues: Small, acid-soluble spore protein I (68 aa).

The protein belongs to the SspI family.

It is found in the spore core. The protein is Small, acid-soluble spore protein I of Halalkalibacterium halodurans (strain ATCC BAA-125 / DSM 18197 / FERM 7344 / JCM 9153 / C-125) (Bacillus halodurans).